The chain runs to 251 residues: Esterase mlcF (251 aa).

Residues Ser126, Asp193, and His221 each act as charge relay system in the active site.

Belongs to the LovG family.

It carries out the reaction dihydro-ML-236C-[compactin nonaketide synthase] + H2O = holo-[compactin nonaketide synthase] + dihydro-ML-236C carboxylate + H(+). The protein operates within polyketide biosynthesis. Its function is as follows. Esterase; part of the gene cluster that mediates the biosynthesis of compactin, also known as mevastatin or ML-236B, and which acts as a potent competitive inhibitor of HMG-CoA reductase. Compactin biosynthesis is performed in two stages. The first stage is catalyzed by the nonaketide synthase mlcA, which belongs to type I polyketide synthases and catalyzes the iterative nine-step formation of the polyketide. This PKS stage is completed by the action of dehydrogenase mlcG, which catalyzes the NADPH-dependent reduction of the unsaturated tetra-, penta- and heptaketide intermediates that arise during the mlcA-mediated biosynthesis of the nonaketide chain and leads to dihydro-ML-236C carboxylate. Covalently bound dihydro-ML-236C carboxylate is released from mlcA by the mlcF esterase. Conversion of dihydro-ML-236C carboxylate into ML-236A carboxylate is subsequently performed with the participation of molecular oxygen and P450 monoogygenase mlcC. Finally, mlcH performs the conversion of ML-236A carboxylate to ML-236B/compactin carboxylate through the addition of the side-chain diketide moiety produced by the diketide synthase mlcB. This is Esterase mlcF from Penicillium citrinum.